Reading from the N-terminus, the 660-residue chain is Probable cation-transporting P-type ATPase J (660 aa).

The next 5 helical transmembrane spans lie at 33-53 (WAAL…CGAP), 60-80 (LFLA…LQAL), 94-114 (AAIG…IVIF), 261-281 (IGMV…GETL), and 292-312 (MIVA…LAAI). Aspartate 340 acts as the 4-aspartylphosphate intermediate in catalysis. Mg(2+) is bound by residues aspartate 544 and aspartate 548. The helical transmembrane segment at 598–618 (IVVANLIVAVTFIAGLVVWDL) threads the bilayer.

The protein belongs to the cation transport ATPase (P-type) (TC 3.A.3) family. Type IB subfamily.

It is found in the cell membrane. The enzyme catalyses ATP + H2O = ADP + phosphate + H(+). In Mycobacterium tuberculosis (strain CDC 1551 / Oshkosh), this protein is Probable cation-transporting P-type ATPase J (ctpJ).